We begin with the raw amino-acid sequence, 86 residues long: Large ribosomal subunit protein uL23c (86 aa).

It belongs to the universal ribosomal protein uL23 family. As to quaternary structure, part of the 50S ribosomal subunit.

The protein localises to the plastid. It is found in the chloroplast. In terms of biological role, binds to 23S rRNA. The sequence is that of Large ribosomal subunit protein uL23c (rpl23) from Chlorella vulgaris (Green alga).